The chain runs to 276 residues: 5-deoxy-glucuronate isomerase (276 aa).

The protein belongs to the isomerase IolB family.

It catalyses the reaction 5-deoxy-D-glucuronate = 5-dehydro-2-deoxy-D-gluconate. Its pathway is polyol metabolism; myo-inositol degradation into acetyl-CoA; acetyl-CoA from myo-inositol: step 4/7. Involved in the isomerization of 5-deoxy-glucuronate (5DG) to 5-dehydro-2-deoxy-D-gluconate (DKG or 2-deoxy-5-keto-D-gluconate). This Geobacillus kaustophilus (strain HTA426) protein is 5-deoxy-glucuronate isomerase.